A 163-amino-acid chain; its full sequence is Carbon monoxide dehydrogenase small chain (163 aa).

Residues 4 to 80 (KIITVNVNGK…GSEVLTVEGL (77 aa)) form the 2Fe-2S ferredoxin-type domain. Positions 42, 47, 50, 62, 101, 104, 136, and 138 each coordinate [2Fe-2S] cluster.

In terms of assembly, dimer of heterotrimers. Each heterotrimer consists of a large, a medium and a small subunit. [2Fe-2S] cluster is required as a cofactor.

It carries out the reaction CO + a quinone + H2O = a quinol + CO2. Functionally, catalyzes the oxidation of carbon monoxide to carbon dioxide. The chain is Carbon monoxide dehydrogenase small chain (cutS) from Hydrogenophaga pseudoflava (Pseudomonas carboxydoflava).